Reading from the N-terminus, the 815-residue chain is Leucine--tRNA ligase (815 aa).

The 'HIGH' region signature appears at 42–52 (PYPSGRLHMGH). Positions 571 to 575 (KMSKS) match the 'KMSKS' region motif. Lys574 lines the ATP pocket.

This sequence belongs to the class-I aminoacyl-tRNA synthetase family.

It localises to the cytoplasm. The catalysed reaction is tRNA(Leu) + L-leucine + ATP = L-leucyl-tRNA(Leu) + AMP + diphosphate. This is Leucine--tRNA ligase from Vesicomyosocius okutanii subsp. Calyptogena okutanii (strain HA).